A 236-amino-acid chain; its full sequence is Giant extracellular hemoglobin linker 2 chain (236 aa).

Residues asparagine 66–isoleucine 108 form the LDL-receptor class A domain. 3 disulfide bridges follow: cysteine 68–cysteine 82, cysteine 75–cysteine 95, and cysteine 89–cysteine 106.

Disulfide-linked dimer of identical chains. A model is proposed for the subunit structure of the Tylorrhynchus hemoglobin, consisting of 216 polypeptides chains, 192 heme-containing chains, and 24 linker chains.

Its function is as follows. Acts as a linker for the assembly of heme-containing chains in the construction of giant hemoglobin. This is Giant extracellular hemoglobin linker 2 chain from Tylorrhynchus heterochetus (Japanese palolo worm).